A 420-amino-acid polypeptide reads, in one-letter code: Glutamyl-tRNA reductase (420 aa).

Substrate-binding positions include 49-52 (TCNR), S107, 112-114 (EPQ), and Q118. The active-site Nucleophile is C50. Position 187–192 (187–192 (GAGETI)) interacts with NADP(+).

This sequence belongs to the glutamyl-tRNA reductase family. As to quaternary structure, homodimer.

The enzyme catalyses (S)-4-amino-5-oxopentanoate + tRNA(Glu) + NADP(+) = L-glutamyl-tRNA(Glu) + NADPH + H(+). Its pathway is porphyrin-containing compound metabolism; protoporphyrin-IX biosynthesis; 5-aminolevulinate from L-glutamyl-tRNA(Glu): step 1/2. Catalyzes the NADPH-dependent reduction of glutamyl-tRNA(Glu) to glutamate 1-semialdehyde (GSA). This chain is Glutamyl-tRNA reductase, found in Nitrosococcus oceani (strain ATCC 19707 / BCRC 17464 / JCM 30415 / NCIMB 11848 / C-107).